The sequence spans 634 residues: 1,4-alpha-glucan branching enzyme GlgB (634 aa).

Asp305 functions as the Nucleophile in the catalytic mechanism. The active-site Proton donor is the Glu357.

The protein belongs to the glycosyl hydrolase 13 family. GlgB subfamily. As to quaternary structure, monomer.

The catalysed reaction is Transfers a segment of a (1-&gt;4)-alpha-D-glucan chain to a primary hydroxy group in a similar glucan chain.. It functions in the pathway glycan biosynthesis; glycogen biosynthesis. Functionally, catalyzes the formation of the alpha-1,6-glucosidic linkages in glycogen by scission of a 1,4-alpha-linked oligosaccharide from growing alpha-1,4-glucan chains and the subsequent attachment of the oligosaccharide to the alpha-1,6 position. The polypeptide is 1,4-alpha-glucan branching enzyme GlgB (Lactiplantibacillus plantarum (strain ATCC BAA-793 / NCIMB 8826 / WCFS1) (Lactobacillus plantarum)).